The chain runs to 103 residues: Large ribosomal subunit protein bL21 (103 aa).

Belongs to the bacterial ribosomal protein bL21 family. Part of the 50S ribosomal subunit. Contacts protein L20.

In terms of biological role, this protein binds to 23S rRNA in the presence of protein L20. This chain is Large ribosomal subunit protein bL21, found in Shewanella putrefaciens (strain CN-32 / ATCC BAA-453).